A 388-amino-acid chain; its full sequence is Proteasomal ubiquitin receptor ADRM1 homolog rpn1302 (388 aa).

In terms of domain architecture, Pru spans 15–132 (RGKYGLVSVK…SLINQLIADP (118 aa)). Disordered stretches follow at residues 202 to 227 (RASSESNLNGPHATAGENGEDHEEAT) and 368 to 388 (SDGEVEEEGDVEMRESNEKDE). Over residues 368–377 (SDGEVEEEGD) the composition is skewed to acidic residues. The span at 378 to 388 (VEMRESNEKDE) shows a compositional bias: basic and acidic residues.

It belongs to the ADRM1 family. Component of the 19S proteasome regulatory particle complex. The 2 S.pombe rpn13 homologs, rpn1301 and rpn1302 are present at a 0.2-1 ratio.

The protein localises to the cytoplasm. The protein resides in the nucleus. Functionally, component of the 26S proteasome, a multiprotein complex involved in the ATP-dependent degradation of ubiquitinated proteins. This complex plays a key role in the maintenance of protein homeostasis by removing misfolded or damaged proteins, which could impair cellular functions, and by removing proteins whose functions are no longer required. Therefore, the proteasome participates in numerous cellular processes, including cell cycle progression, apoptosis, or DNA damage repair. Within the complex, functions as a proteasomal ubiquitin receptor. The protein is Proteasomal ubiquitin receptor ADRM1 homolog rpn1302 (rpn1302) of Schizosaccharomyces pombe (strain 972 / ATCC 24843) (Fission yeast).